The following is a 429-amino-acid chain: Methylenetetrahydrofolate--tRNA-(uracil-5-)-methyltransferase TrmFO (429 aa).

Residue 7-12 (GAGLAG) coordinates FAD.

The protein belongs to the MnmG family. TrmFO subfamily. FAD serves as cofactor.

It localises to the cytoplasm. It catalyses the reaction uridine(54) in tRNA + (6R)-5,10-methylene-5,6,7,8-tetrahydrofolate + NADH + H(+) = 5-methyluridine(54) in tRNA + (6S)-5,6,7,8-tetrahydrofolate + NAD(+). The enzyme catalyses uridine(54) in tRNA + (6R)-5,10-methylene-5,6,7,8-tetrahydrofolate + NADPH + H(+) = 5-methyluridine(54) in tRNA + (6S)-5,6,7,8-tetrahydrofolate + NADP(+). Functionally, catalyzes the folate-dependent formation of 5-methyl-uridine at position 54 (M-5-U54) in all tRNAs. This is Methylenetetrahydrofolate--tRNA-(uracil-5-)-methyltransferase TrmFO from Thermosipho africanus (strain TCF52B).